The primary structure comprises 242 residues: MDTPDYKRVVLKLSGEALAGNDGFGINPSVVNLISAQIKEVVELGVEVAIVVGGGNIWRGKLGSEMGMDRAAADQMGMLATIMNSLSLQDSLENIGVATRVQTSIDMRQIAEPYIRRKAIRHLEKGRVVIFAGGTGNPYFSTDTAAALRAAEIEADVILMAKNNVDGVYNADPKLDENAKKYEELSYLDVIKEGLEVMDTTASSLSMDNDIPLIVFSFTEQGNNIKRVILGEKIGTTVRGKK.

12–15 (KLSG) serves as a coordination point for ATP. An involved in allosteric activation by GTP region spans residues 20 to 25 (GNDGFG). Residue Gly-54 coordinates UMP. ATP-binding residues include Gly-55 and Arg-59. Residues Asp-74 and 135 to 142 (TGNPYFST) each bind UMP. Positions 163, 169, and 172 each coordinate ATP.

This sequence belongs to the UMP kinase family. In terms of assembly, homohexamer.

The protein localises to the cytoplasm. It carries out the reaction UMP + ATP = UDP + ADP. Its pathway is pyrimidine metabolism; CTP biosynthesis via de novo pathway; UDP from UMP (UMPK route): step 1/1. Allosterically activated by GTP. Inhibited by UTP. Functionally, catalyzes the reversible phosphorylation of UMP to UDP. The protein is Uridylate kinase of Listeria innocua serovar 6a (strain ATCC BAA-680 / CLIP 11262).